The sequence spans 1066 residues: Zinc finger and BTB domain-containing protein 21 (1066 aa).

One can recognise a BTB domain in the interval 30-96 (CDVLLIVGDQ…IYSSSLFVEK (67 aa)). The segment at 30–96 (CDVLLIVGDQ…IYSSSLFVEK (67 aa)) is mediates homodimerization. K40 participates in a covalent cross-link: Glycyl lysine isopeptide (Lys-Gly) (interchain with G-Cter in SUMO1); alternate. A Glycyl lysine isopeptide (Lys-Gly) (interchain with G-Cter in SUMO2); alternate cross-link involves residue K40. The span at 154-177 (SRNEAQGKTVSQNQPDVSHTSRPS) shows a compositional bias: polar residues. The tract at residues 154–196 (SRNEAQGKTVSQNQPDVSHTSRPSPSIAVKANTNKPHVPKPIE) is disordered. Glycyl lysine isopeptide (Lys-Gly) (interchain with G-Cter in SUMO2) cross-links involve residues K255, K266, K273, K312, and K337. Phosphoserine occurs at positions 345 and 381. K383 participates in a covalent cross-link: Glycyl lysine isopeptide (Lys-Gly) (interchain with G-Cter in SUMO2). The span at 388-399 (DCSEKTALDDRP) shows a compositional bias: basic and acidic residues. Disordered stretches follow at residues 388-442 (DCSE…DPSD), 454-485 (TAAASSSSVTRDLSLKTEDDQKDMSRLPAKRR), and 498-525 (KVNEHGSPVSEDNFEEGSSPTLLDADFP). A phosphoserine mark is found at S411 and S422. K430 participates in a covalent cross-link: Glycyl lysine isopeptide (Lys-Gly) (interchain with G-Cter in SUMO2). T431 is modified (phosphothreonine). S434, S435, and S438 each carry phosphoserine. A compositionally biased stretch (basic and acidic residues) spans 466–478 (LSLKTEDDQKDMS). Glycyl lysine isopeptide (Lys-Gly) (interchain with G-Cter in SUMO2) cross-links involve residues K469 and K475. C2H2-type zinc fingers lie at residues 546–569 (FKCKHCLKIFRSTAGLHRHVNMYH) and 575–598 (YACDICHKRFHTNFKVWTHCQTQH). S605 carries the phosphoserine modification. Glycyl lysine isopeptide (Lys-Gly) (interchain with G-Cter in SUMO2) cross-links involve residues K617, K643, and K659. The C2H2-type 3 zinc-finger motif lies at 670–692 (YICTYCGKAYRFLSQFKQHIKMH). Residue K702 forms a Glycyl lysine isopeptide (Lys-Gly) (interchain with G-Cter in SUMO2) linkage. At S714 the chain carries Phosphoserine. The C2H2-type 4; atypical zinc-finger motif lies at 748–770 (AVCPYCSLRFFSPELKQEHESKC). Glycyl lysine isopeptide (Lys-Gly) (interchain with G-Cter in SUMO2) cross-links involve residues K763 and K785. The C2H2-type 5 zinc finger occupies 775–798 (LTCLECMRTFKSSFSIWRHQVEVH). The interval 806–840 (TENFSLPVLDHNGDVTGSSRPQSQPEPNKVNHIVT) is disordered. A compositionally biased stretch (polar residues) spans 820-831 (VTGSSRPQSQPE). Residue K875 forms a Glycyl lysine isopeptide (Lys-Gly) (interchain with G-Cter in SUMO2) linkage. K879 participates in a covalent cross-link: Glycyl lysine isopeptide (Lys-Gly) (interchain with G-Cter in SUMO1); alternate. A Glycyl lysine isopeptide (Lys-Gly) (interchain with G-Cter in SUMO2); alternate cross-link involves residue K879. The tract at residues 879–906 (KEEPVEEAEEEAPEASTAPKEAGPSKEA) is disordered. The segment covering 882–891 (PVEEAEEEAP) has biased composition (acidic residues). The segment at 909 to 932 (WPCEKCGKMFTVHKQLERHQELLC) adopts a C2H2-type 6; atypical zinc-finger fold. K935 is covalently cross-linked (Glycyl lysine isopeptide (Lys-Gly) (interchain with G-Cter in SUMO2)). A C2H2-type 7 zinc finger spans residues 937–959 (FICHVCNKAFRTNFRLWSHFQSH). Positions 963–1014 (ASEESAHKESEVCPVPTNSPSPPPLPPPPPLPKIQPLEPDSPTGLSENPTPA) are disordered. Residues 979-995 (TNSPSPPPLPPPPPLPK) show a composition bias toward pro residues. Phosphoserine is present on S1003. The segment at 1043–1065 (FMCKLCHRTFKTAFSLWSHEQTH) adopts a C2H2-type 8 zinc-finger fold.

In terms of assembly, homodimer. Interacts with ZBTB14. Ubiquitous in fetal and adult tissues.

The protein localises to the nucleus. Its function is as follows. Acts as a transcription repressor. The chain is Zinc finger and BTB domain-containing protein 21 (ZBTB21) from Homo sapiens (Human).